A 102-amino-acid polypeptide reads, in one-letter code: Protein AC4 (102 aa).

This sequence belongs to the geminiviridae protein AC4/C4 family.

Its function is as follows. Pathogenicity determinant. May act as a suppressor of RNA-mediated gene silencing, also known as post-transcriptional gene silencing (PTGS), a mechanism of plant viral defense that limits the accumulation of viral RNAs. The sequence is that of Protein AC4 from Indian cassava mosaic virus (ICMV).